We begin with the raw amino-acid sequence, 209 residues long: DNA ADP-ribosyl transferase (209 aa).

A DarT domain is found at 9–209; sequence TPIYHITHID…RVCIRKDWYY (201 aa). NAD(+)-binding positions include 13 to 15, glycine 22, and leucine 30; that span reads HIT. Positions 35-53 are NAD(+)-binding element; sequence SPPKQRSIAYAHIQERRNR. Residues 44-50 mediate DNA binding; it reads YAHIQER. Arginine 51 lines the NAD(+) pocket. Residue arginine 51 is the Proton acceptor of the active site. DNA-binding regions lie at residues 75–80, 145–148, and 154–158; these read RSPMLY, SYWA, and REKKQ. Residues 116 to 160 form an ADP-ribosylating turn-turn loop region; the sequence is TDRHGVLSHARFFRQLEELAQLDWEAIQASYWADPPELREKKQAE. Residue glutamate 160 is part of the active site.

It belongs to the DarT ADP-ribosyltransferase family. In terms of assembly, interacts with cognate antitoxin DarG (via C-terminus); this heterodimeric complex neutralizes the toxic effect of DarT by preventing ssDNA binding to DarT and consequently inactivating the toxin by direct protein-protein interactions.

The catalysed reaction is a thymidine in DNA + NAD(+) = an N-(ADP-alpha-D-ribosyl)-thymidine in DNA + nicotinamide + H(+). In terms of biological role, toxic component of the hybrid type II/IV toxin-antitoxin (TA) system DarTG, which plays a crucial role in controlling bacterial growth and bacteriophage infection. In case of phage infection, DarT toxin ADP-ribosylates DNA, which inhibits both viral DNA and RNA synthesis and leads to abortive infection. ADP-ribosylates ssDNA on the second thymidine of the consensus sequence 5'-TNTC-3'; the protein does not auto-modify. Arg-51 is highly flexible, allowing it to assume multiple positions in the crystal structures. Its toxic effect is neutralized by cognate antitoxin DarG. This chain is DNA ADP-ribosyl transferase, found in Thermus sp. (strain 2.9).